The chain runs to 297 residues: Protoheme IX farnesyltransferase (297 aa).

Helical transmembrane passes span 16-36 (VVALIVFTALVGMVLAIPGVP), 45-65 (VLGFLGIWLAASAAAAINQLL), 93-113 (VFASVLIVLSMVILVLWVNLI), 114-134 (TAVLTFASLIGYAVIYTVYLK), 141-161 (IVIGGLAGAMPPMLGWAAVTG), 172-192 (SLLVLIIFIWTPPHFWALAIF), 223-243 (VVLALVCLLPYLVGMSGAFYL), 244-264 (GGAIVLNAVFLWYAWRMLDPP), and 277-297 (IVYLMALFAFLLVDHWILPWL).

Belongs to the UbiA prenyltransferase family. Protoheme IX farnesyltransferase subfamily.

Its subcellular location is the cell inner membrane. It carries out the reaction heme b + (2E,6E)-farnesyl diphosphate + H2O = Fe(II)-heme o + diphosphate. The protein operates within porphyrin-containing compound metabolism; heme O biosynthesis; heme O from protoheme: step 1/1. Converts heme B (protoheme IX) to heme O by substitution of the vinyl group on carbon 2 of heme B porphyrin ring with a hydroxyethyl farnesyl side group. The chain is Protoheme IX farnesyltransferase from Stenotrophomonas maltophilia (strain R551-3).